Reading from the N-terminus, the 345-residue chain is NADPH dehydrogenase (345 aa).

23–26 is an FMN binding site; that stretch reads SPMC. Tyr28 is a substrate binding site. Positions 60 and 102 each coordinate FMN. Residue 164–167 participates in substrate binding; sequence HGAH. Residues Arg215 and 307–308 contribute to the FMN site; that span reads GR.

This sequence belongs to the NADH:flavin oxidoreductase/NADH oxidase family. NamA subfamily. Homotetramer. The cofactor is FMN.

It carries out the reaction A + NADPH + H(+) = AH2 + NADP(+). Its function is as follows. Catalyzes the reduction of the double bond of an array of alpha,beta-unsaturated aldehydes and ketones. It also reduces the nitro group of nitroester and nitroaromatic compounds. It could have a role in detoxification processes. This is NADPH dehydrogenase from Bacillus cereus (strain ATCC 10987 / NRS 248).